Here is a 304-residue protein sequence, read N- to C-terminus: dTDP-4-dehydrorhamnose reductase (304 aa).

NADH-binding positions include 16-18 (GML), 42-43 (DI), and 66-68 (AWT). Residues 17 to 18 (ML), 42 to 43 (DI), and 66 to 68 (AWT) each bind NADPH. Position 107–108 (107–108 (TD)) interacts with dTDP-beta-L-rhamnose. The NADH site is built by Tyr131 and Lys135. Residues Tyr131 and Lys135 each contribute to the NADPH site. Residue Tyr131 is the Proton donor/acceptor of the active site. Trp157 contributes to the dTDP-beta-L-rhamnose binding site.

Belongs to the dTDP-4-dehydrorhamnose reductase family. As to quaternary structure, homodimer. The cofactor is Mg(2+).

The catalysed reaction is dTDP-beta-L-rhamnose + NADP(+) = dTDP-4-dehydro-beta-L-rhamnose + NADPH + H(+). Its pathway is carbohydrate biosynthesis; dTDP-L-rhamnose biosynthesis. It functions in the pathway antibiotic biosynthesis; streptomycin biosynthesis. Its function is as follows. Involved in the biosynthesis of the streptose moiety of streptomycin. Catalyzes the reduction of dTDP-6-deoxy-L-lyxo-4-hexulose to yield dTDP-L-rhamnose. RmlD uses NADH and NADPH nearly equally well. This Streptomyces griseus protein is dTDP-4-dehydrorhamnose reductase.